A 323-amino-acid polypeptide reads, in one-letter code: MSSKPPAIFLMGPTAAGKTDLAIELTKVLPCELISVDSALVYRGMDIGSAKPSKEILAAHPHRLIDIRDPAESYSAAQFRADALEAMAEITARGKIPLLVGGTMLYYKALIDGLADMPAADAAVRAELEAQAEALGLAELHRQLAEVDPVSAARIHPNDPQRLIRALEVYRVSGESMTAHRQRQFAESRGADAGAGGHLPYTVASLAIAPTDRHILHQRIALRFSQMLEQGFVEEVRSLRARSDLHAGLPSIRAVGYRQVWDYLDGKLTENEMRERGIIATRQLAKRQFTWLRGWPEVHWLDSLACDNLSRTLKYLGAISILS.

12–19 (GPTAAGKT) provides a ligand contact to ATP. Position 14–19 (14–19 (TAAGKT)) interacts with substrate. Interaction with substrate tRNA stretches follow at residues 37–40 (DSAL) and 161–165 (QRLIR).

The protein belongs to the IPP transferase family. As to quaternary structure, monomer. It depends on Mg(2+) as a cofactor.

It carries out the reaction adenosine(37) in tRNA + dimethylallyl diphosphate = N(6)-dimethylallyladenosine(37) in tRNA + diphosphate. Catalyzes the transfer of a dimethylallyl group onto the adenine at position 37 in tRNAs that read codons beginning with uridine, leading to the formation of N6-(dimethylallyl)adenosine (i(6)A). The polypeptide is tRNA dimethylallyltransferase (Pseudomonas putida (strain GB-1)).